The sequence spans 75 residues: DNA-directed RNA polymerase subunit omega (75 aa).

This sequence belongs to the RNA polymerase subunit omega family. In terms of assembly, the RNAP catalytic core consists of 2 alpha, 1 beta, 1 beta' and 1 omega subunit. When a sigma factor is associated with the core the holoenzyme is formed, which can initiate transcription.

The enzyme catalyses RNA(n) + a ribonucleoside 5'-triphosphate = RNA(n+1) + diphosphate. Its function is as follows. Promotes RNA polymerase assembly. Latches the N- and C-terminal regions of the beta' subunit thereby facilitating its interaction with the beta and alpha subunits. This Nitratidesulfovibrio vulgaris (strain DSM 19637 / Miyazaki F) (Desulfovibrio vulgaris) protein is DNA-directed RNA polymerase subunit omega.